The following is a 599-amino-acid chain: Putative fused cobalt transport protein CbiMQ (599 aa).

Residues M1–S239 form a cbiM region. 16 helical membrane-spanning segments follow: residues W12–I32, L44–G64, F74–F94, T106–F126, S140–T160, L162–Y182, L183–L203, I247–L267, W303–L323, Q356–S376, P377–A397, L407–G427, I438–S458, G463–L483, I493–I513, and M579–L599. Residues D341–L599 form a cbiQ region.

This sequence in the N-terminal section; belongs to the CbiM family. In the C-terminal section; belongs to the CbiQ family. As to quaternary structure, forms an energy-coupling factor (ECF) transporter complex composed of an ATP-binding protein (A component, CbiO), a transmembrane protein (T component, CbiQ) and 2 possible substrate-capture proteins (S components, CbiM and CbiN) of unknown stoichimetry.

It localises to the cell membrane. It functions in the pathway cofactor biosynthesis; adenosylcobalamin biosynthesis. In terms of biological role, part of the energy-coupling factor (ECF) transporter complex CbiMNOQ involved in cobalt import. The sequence is that of Putative fused cobalt transport protein CbiMQ (cbiMQ) from Methanocorpusculum labreanum (strain ATCC 43576 / DSM 4855 / Z).